The primary structure comprises 447 residues: UDP-glycosyltransferase 76E5 (447 aa).

Residues serine 272, 324 to 326, 341 to 349, and 363 to 366 each bind UDP-alpha-D-glucose; these read APQ, HCGWNSTLE, and NGEQ.

It belongs to the UDP-glycosyltransferase family.

The chain is UDP-glycosyltransferase 76E5 (UGT76E5) from Arabidopsis thaliana (Mouse-ear cress).